Here is a 167-residue protein sequence, read N- to C-terminus: Telethonin (167 aa).

At serine 39 the chain carries Phosphoserine. A disordered region spans residues 142-167 (PVVPVSKPGPLRRTLSRSMSQEAQRG). The span at 157–167 (SRSMSQEAQRG) shows a compositional bias: polar residues.

Interacts with MYOZ1, MYOZ2 and MYOZ3. Interacts with CSRP3. Interacts directly with the N-terminal Ig-like domains of 2 titin (TTN) molecules. Interacts with ANKRD2; the interaction is direct.

The protein localises to the cytoplasm. The protein resides in the myofibril. It localises to the sarcomere. In terms of biological role, muscle assembly regulating factor. Mediates the antiparallel assembly of titin (TTN) molecules at the sarcomeric Z-disk. This is Telethonin (Tcap) from Mus musculus (Mouse).